The following is a 798-amino-acid chain: Palmitoyl thioesterase CPT1C (798 aa).

Residues 1-52 (MAEAHQASSLLSSLSSDGAEVELSSPVWQEIYLCALRSWKRHLWRVWNDFLA) lie on the Cytoplasmic side of the membrane. The helical transmembrane segment at 53 to 75 (GVVPATPLSWLFLFSTIQLACLL) threads the bilayer. Topologically, residues 76-103 (QLDPSLGLMEKIKELLPDWGGQHHQLQG) are lumenal. Residues 104-126 (FLSAAVFASCLWGALIFTLHVAL) form a helical membrane-spanning segment. At 127–798 (RLLLSHHGWL…PNTPTSSTNL (672 aa)) the chain is on the cytoplasmic side. Catalysis depends on histidine 469, which acts as the Proton acceptor. 551-563 (GKSFIKCCHVSSD) serves as a coordination point for CoA. The (R)-carnitine site is built by tyrosine 585, serine 587, and threonine 598. The tract at residues 759–798 (LFRVGQHFKRQFRGENSDYRYNFLSCKTVDPNTPTSSTNL) is required for interaction with GRIA1.

It belongs to the carnitine/choline acetyltransferase family. Peripherally associated with AMPAR complex. AMPAR complex consists of an inner core made of 4 pore-forming GluA/GRIA proteins (GRIA1, GRIA2, GRIA3 and GRIA4) and 4 major auxiliary subunits arranged in a twofold symmetry. One of the two pairs of distinct binding sites is occupied either by CNIH2, CNIH3 or CACNG2, CACNG3. The other harbors CACNG2, CACNG3, CACNG4, CACNG8 or GSG1L. This inner core of AMPAR complex is complemented by outer core constituents binding directly to the GluA/GRIA proteins at sites distinct from the interaction sites of the inner core constituents. Outer core constituents include at least PRRT1, PRRT2, CKAMP44/SHISA9, FRRS1L and NRN1. The proteins of the inner and outer core serve as a platform for other, more peripherally associated AMPAR constituents, including CPT1C. Alone or in combination, these auxiliary subunits control the gating and pharmacology of the AMPAR complex and profoundly impact their biogenesis and protein processing. Interacts with SACM1L; the interaction regulates SACM1L phosphatidylinositol-3-phosphatase activity and translocation to endoplasmic reticulum/trans Golgi network in a malonyl-CoA dependent manner. Interacts with ATL1. Predominantly expressed in brain (at protein level) and testis, highly expressed in the hippocampus, amygdala and cerebellum. Expressed in neurons but not astrocytes. Expressed in the ventral horn from spinal cords.

It localises to the synapse. Its subcellular location is the cell projection. The protein localises to the axon. The protein resides in the dendrite. It is found in the dendritic spine. It localises to the endoplasmic reticulum membrane. The catalysed reaction is S-hexadecanoyl-L-cysteinyl-[protein] + H2O = L-cysteinyl-[protein] + hexadecanoate + H(+). In terms of biological role, palmitoyl thioesterase specifically expressed in the endoplasmic reticulum of neurons. Modulates the trafficking of the glutamate receptor, AMPAR, to plasma membrane through depalmitoylation of GRIA1. Also regulates AMPR trafficking through the regulation of SACM1L phosphatidylinositol-3-phosphatase activity by interaction in a malonyl-CoA dependent manner. Binds malonyl-CoA and couples malonyl-CoA to ceramide levels, necessary for proper spine maturation and contributing to systemic energy homeostasis and appetite control. Binds to palmitoyl-CoA, but does not have carnitine palmitoyltransferase 1 catalytic activity or at very low levels. This chain is Palmitoyl thioesterase CPT1C (Cpt1c), found in Mus musculus (Mouse).